Here is a 342-residue protein sequence, read N- to C-terminus: 4-hydroxy-3-methylbut-2-enyl diphosphate reductase (342 aa).

C47 provides a ligand contact to [4Fe-4S] cluster. 2 residues coordinate (2E)-4-hydroxy-3-methylbut-2-enyl diphosphate: H78 and H111. Positions 78 and 111 each coordinate dimethylallyl diphosphate. H78 and H111 together coordinate isopentenyl diphosphate. [4Fe-4S] cluster is bound at residue C133. H161 is a binding site for (2E)-4-hydroxy-3-methylbut-2-enyl diphosphate. Position 161 (H161) interacts with dimethylallyl diphosphate. H161 lines the isopentenyl diphosphate pocket. The Proton donor role is filled by E163. T201 lines the (2E)-4-hydroxy-3-methylbut-2-enyl diphosphate pocket. C231 lines the [4Fe-4S] cluster pocket. S259, S260, N261, and S303 together coordinate (2E)-4-hydroxy-3-methylbut-2-enyl diphosphate. Dimethylallyl diphosphate contacts are provided by S259, S260, N261, and S303. Isopentenyl diphosphate is bound by residues S259, S260, N261, and S303.

This sequence belongs to the IspH family. [4Fe-4S] cluster is required as a cofactor.

The catalysed reaction is isopentenyl diphosphate + 2 oxidized [2Fe-2S]-[ferredoxin] + H2O = (2E)-4-hydroxy-3-methylbut-2-enyl diphosphate + 2 reduced [2Fe-2S]-[ferredoxin] + 2 H(+). It carries out the reaction dimethylallyl diphosphate + 2 oxidized [2Fe-2S]-[ferredoxin] + H2O = (2E)-4-hydroxy-3-methylbut-2-enyl diphosphate + 2 reduced [2Fe-2S]-[ferredoxin] + 2 H(+). The protein operates within isoprenoid biosynthesis; dimethylallyl diphosphate biosynthesis; dimethylallyl diphosphate from (2E)-4-hydroxy-3-methylbutenyl diphosphate: step 1/1. It participates in isoprenoid biosynthesis; isopentenyl diphosphate biosynthesis via DXP pathway; isopentenyl diphosphate from 1-deoxy-D-xylulose 5-phosphate: step 6/6. Catalyzes the conversion of 1-hydroxy-2-methyl-2-(E)-butenyl 4-diphosphate (HMBPP) into a mixture of isopentenyl diphosphate (IPP) and dimethylallyl diphosphate (DMAPP). Acts in the terminal step of the DOXP/MEP pathway for isoprenoid precursor biosynthesis. This is 4-hydroxy-3-methylbut-2-enyl diphosphate reductase from Anaplasma marginale (strain St. Maries).